A 503-amino-acid polypeptide reads, in one-letter code: Maturase K (503 aa).

It belongs to the intron maturase 2 family. MatK subfamily.

It localises to the plastid. Its subcellular location is the chloroplast. Usually encoded in the trnK tRNA gene intron. Probably assists in splicing its own and other chloroplast group II introns. This Liquidambar orientalis (Oriental sweet gum) protein is Maturase K.